Reading from the N-terminus, the 426-residue chain is ATP-dependent Clp protease ATP-binding subunit ClpX (426 aa).

Residues 1-52 (MNEIKKRCSFCNKEESLDNPIINSGITPDVYICNYCLIVGSEILTGYLNKNP) enclose the ClpX-type ZB domain. The Zn(2+) site is built by Cys8, Cys11, Cys33, and Cys36. Residue 129–136 (PTGSGKTL) coordinates ATP.

Belongs to the ClpX chaperone family. As to quaternary structure, component of the ClpX-ClpP complex. Forms a hexameric ring that, in the presence of ATP, binds to fourteen ClpP subunits assembled into a disk-like structure with a central cavity, resembling the structure of eukaryotic proteasomes.

ATP-dependent specificity component of the Clp protease. It directs the protease to specific substrates. Can perform chaperone functions in the absence of ClpP. This chain is ATP-dependent Clp protease ATP-binding subunit ClpX, found in Helicobacter hepaticus (strain ATCC 51449 / 3B1).